The primary structure comprises 223 residues: Thiamine-phosphate synthase (223 aa).

4-amino-2-methyl-5-(diphosphooxymethyl)pyrimidine-binding positions include 37-41 and D72; that span reads QFREK. 2 residues coordinate Mg(2+): D73 and D92. S110 contributes to the 4-amino-2-methyl-5-(diphosphooxymethyl)pyrimidine binding site. A 2-[(2R,5Z)-2-carboxy-4-methylthiazol-5(2H)-ylidene]ethyl phosphate-binding site is contributed by 136-138; that stretch reads TQS. K139 is a binding site for 4-amino-2-methyl-5-(diphosphooxymethyl)pyrimidine. 2-[(2R,5Z)-2-carboxy-4-methylthiazol-5(2H)-ylidene]ethyl phosphate-binding positions include G168 and 188 to 189; that span reads IS.

This sequence belongs to the thiamine-phosphate synthase family. Mg(2+) serves as cofactor.

The enzyme catalyses 2-[(2R,5Z)-2-carboxy-4-methylthiazol-5(2H)-ylidene]ethyl phosphate + 4-amino-2-methyl-5-(diphosphooxymethyl)pyrimidine + 2 H(+) = thiamine phosphate + CO2 + diphosphate. The catalysed reaction is 2-(2-carboxy-4-methylthiazol-5-yl)ethyl phosphate + 4-amino-2-methyl-5-(diphosphooxymethyl)pyrimidine + 2 H(+) = thiamine phosphate + CO2 + diphosphate. It catalyses the reaction 4-methyl-5-(2-phosphooxyethyl)-thiazole + 4-amino-2-methyl-5-(diphosphooxymethyl)pyrimidine + H(+) = thiamine phosphate + diphosphate. It functions in the pathway cofactor biosynthesis; thiamine diphosphate biosynthesis; thiamine phosphate from 4-amino-2-methyl-5-diphosphomethylpyrimidine and 4-methyl-5-(2-phosphoethyl)-thiazole: step 1/1. Its function is as follows. Condenses 4-methyl-5-(beta-hydroxyethyl)thiazole monophosphate (THZ-P) and 2-methyl-4-amino-5-hydroxymethyl pyrimidine pyrophosphate (HMP-PP) to form thiamine monophosphate (TMP). The sequence is that of Thiamine-phosphate synthase from Streptococcus agalactiae serotype Ia (strain ATCC 27591 / A909 / CDC SS700).